Consider the following 679-residue polypeptide: UvrABC system protein B (679 aa).

In terms of domain architecture, Helicase ATP-binding spans 25–412; the sequence is EGVNQGQRYQ…DGHLAEQVIR (388 aa). 38–45 is an ATP binding site; sequence GATGTGKT. The short motif at 91–114 is the Beta-hairpin element; sequence YYDYYQPEAYVPVSDTYIAKTSSI. One can recognise a Helicase C-terminal domain in the interval 429–591; it reads QVDDLLAEIR…IVPRPAGKRA (163 aa). The UVR domain occupies 639-674; that stretch reads PELIDQLETKMKEAAKNLNFEEAASLRDRIKKFRQK.

It belongs to the UvrB family. In terms of assembly, forms a heterotetramer with UvrA during the search for lesions. Interacts with UvrC in an incision complex.

The protein resides in the cytoplasm. Functionally, the UvrABC repair system catalyzes the recognition and processing of DNA lesions. A damage recognition complex composed of 2 UvrA and 2 UvrB subunits scans DNA for abnormalities. Upon binding of the UvrA(2)B(2) complex to a putative damaged site, the DNA wraps around one UvrB monomer. DNA wrap is dependent on ATP binding by UvrB and probably causes local melting of the DNA helix, facilitating insertion of UvrB beta-hairpin between the DNA strands. Then UvrB probes one DNA strand for the presence of a lesion. If a lesion is found the UvrA subunits dissociate and the UvrB-DNA preincision complex is formed. This complex is subsequently bound by UvrC and the second UvrB is released. If no lesion is found, the DNA wraps around the other UvrB subunit that will check the other stand for damage. The chain is UvrABC system protein B from Prochlorococcus marinus (strain MIT 9313).